A 269-amino-acid chain; its full sequence is MSANSEDQSAQLSLHLDNEWSFNFGSETLNASQLDKSQDQTIFENNSILVDKNVYEQLVATCDAMKAQLHQLMEMVDEKTFDDQNQNSEEMKLILKERDELKKKVDQKSKETVHWTKKYYKLKAYGQEILKKRENEIKLLKSEVVDGKKKLNEIVETINHLEDAANKEKIKRKNVESEMRKADKIIKDALREEMEARKQSQKEYLLEKTERMALEEKISENAASARGVIVRSTCPVADHHILNQRIDVLQRQRKILVESINKRDSPIHH.

Residues 52–262 are a coiled coil; that stretch reads KNVYEQLVAT…RKILVESINK (211 aa).

This is an uncharacterized protein from Caenorhabditis elegans.